The chain runs to 555 residues: Oligo-1,6-glucosidase (555 aa).

Asp199 functions as the Nucleophile in the catalytic mechanism. The active-site Proton donor is Glu255.

It belongs to the glycosyl hydrolase 13 family.

Its subcellular location is the cytoplasm. The enzyme catalyses Hydrolysis of (1-&gt;6)-alpha-D-glucosidic linkages in some oligosaccharides produced from starch and glycogen by alpha-amylase, and in isomaltose.. In Heyndrickxia coagulans (Weizmannia coagulans), this protein is Oligo-1,6-glucosidase (malL).